The primary structure comprises 289 residues: Energy-coupling factor transporter ATP-binding protein EcfA2 (289 aa).

Positions 3–246 (IRFKQVDFTY…TQWLKEKQLG (244 aa)) constitute an ABC transporter domain. 40–47 (GHTGSGKS) is an ATP binding site.

Belongs to the ABC transporter superfamily. Energy-coupling factor EcfA family. Forms a stable energy-coupling factor (ECF) transporter complex composed of 2 membrane-embedded substrate-binding proteins (S component), 2 ATP-binding proteins (A component) and 2 transmembrane proteins (T component).

The protein localises to the cell membrane. Functionally, ATP-binding (A) component of a common energy-coupling factor (ECF) ABC-transporter complex. Unlike classic ABC transporters this ECF transporter provides the energy necessary to transport a number of different substrates. The protein is Energy-coupling factor transporter ATP-binding protein EcfA2 of Enterococcus faecalis (strain ATCC 700802 / V583).